The sequence spans 768 residues: Photosystem I P700 chlorophyll a apoprotein A1 (768 aa).

8 helical membrane-spanning segments follow: residues 76–99, 162–185, 201–225, 310–328, 369–392, 408–434, 456–478, and 559–577; these read VFSAHFGHLAVIFIWMSAAFFHGA, LMALAIGALLMAAIMLHGGIYHYH, LNHHIAGLVGLGSIAWAGHCIHIGA, ISHHHLAFGVLAVLGGHLY, WHAQLGLNLAMIGSLSIIISHHMY, LGLFTHHMWIGGLFIVGAAAHAGIAMI, ALISHLNWACMFLGFHSFGLYIH, and FMIHHIHAFTIHVTLLILL. Residues cysteine 601 and cysteine 610 each coordinate [4Fe-4S] cluster. 2 helical membrane-spanning segments follow: residues 617 to 638 and 682 to 704; these read HVFLGLFWMYNGLSVVIFHFSW and ISMYGLMFLGAHFVWAFSLMFLF. Histidine 693 is a divinylchlorophyll a' binding site. Divinyl chlorophyll a-binding residues include methionine 701 and tyrosine 709. Tryptophan 710 provides a ligand contact to phylloquinone. Residues 742-762 form a helical membrane-spanning segment; that stretch reads AVGAAHFLLGGIATTWAFFHA.

The protein belongs to the PsaA/PsaB family. As to quaternary structure, the PsaA/B heterodimer binds the P700 divinyl chlorophyll special pair and subsequent electron acceptors. PSI consists of a core antenna complex that captures photons, and an electron transfer chain that converts photonic excitation into a charge separation. The cyanobacterial PSI reaction center is composed of one copy each of PsaA,B,C,D,E,F,I,J,K,L,M and X, and forms trimeric complexes. The cofactor is PSI electron transfer chain: 5 divinyl chlorophyll a, 1 divinyl chlorophyll a', 2 phylloquinones and 3 4Fe-4S clusters. PSI core antenna: 90 divinyl chlorophyll a, 22 carotenoids, 3 phospholipids and 1 galactolipid. P700 is a divinyl chlorophyll a/divinyl chlorophyll a' dimer, A0 is one or more divinyl chlorophyll a, A1 is one or both phylloquinones and FX is a shared 4Fe-4S iron-sulfur center..

It localises to the cellular thylakoid membrane. It carries out the reaction reduced [plastocyanin] + hnu + oxidized [2Fe-2S]-[ferredoxin] = oxidized [plastocyanin] + reduced [2Fe-2S]-[ferredoxin]. Functionally, psaA and PsaB bind P700, the primary electron donor of photosystem I (PSI), as well as the electron acceptors A0, A1 and FX. PSI is a plastocyanin/cytochrome c6-ferredoxin oxidoreductase, converting photonic excitation into a charge separation, which transfers an electron from the donor P700 chlorophyll pair to the spectroscopically characterized acceptors A0, A1, FX, FA and FB in turn. Oxidized P700 is reduced on the lumenal side of the thylakoid membrane by plastocyanin or cytochrome c6. The protein is Photosystem I P700 chlorophyll a apoprotein A1 of Prochlorococcus marinus (strain NATL2A).